A 218-amino-acid polypeptide reads, in one-letter code: Phosphoribosylformylglycinamidine synthase subunit PurQ (218 aa).

The region spanning Arg-2 to Gly-218 is the Glutamine amidotransferase type-1 domain. Catalysis depends on Cys-85, which acts as the Nucleophile. Active-site residues include His-192 and Glu-194.

As to quaternary structure, part of the FGAM synthase complex composed of 1 PurL, 1 PurQ and 2 PurS subunits.

Its subcellular location is the cytoplasm. It catalyses the reaction N(2)-formyl-N(1)-(5-phospho-beta-D-ribosyl)glycinamide + L-glutamine + ATP + H2O = 2-formamido-N(1)-(5-O-phospho-beta-D-ribosyl)acetamidine + L-glutamate + ADP + phosphate + H(+). It carries out the reaction L-glutamine + H2O = L-glutamate + NH4(+). It functions in the pathway purine metabolism; IMP biosynthesis via de novo pathway; 5-amino-1-(5-phospho-D-ribosyl)imidazole from N(2)-formyl-N(1)-(5-phospho-D-ribosyl)glycinamide: step 1/2. Part of the phosphoribosylformylglycinamidine synthase complex involved in the purines biosynthetic pathway. Catalyzes the ATP-dependent conversion of formylglycinamide ribonucleotide (FGAR) and glutamine to yield formylglycinamidine ribonucleotide (FGAM) and glutamate. The FGAM synthase complex is composed of three subunits. PurQ produces an ammonia molecule by converting glutamine to glutamate. PurL transfers the ammonia molecule to FGAR to form FGAM in an ATP-dependent manner. PurS interacts with PurQ and PurL and is thought to assist in the transfer of the ammonia molecule from PurQ to PurL. The polypeptide is Phosphoribosylformylglycinamidine synthase subunit PurQ (Methanothermobacter thermautotrophicus (strain ATCC 29096 / DSM 1053 / JCM 10044 / NBRC 100330 / Delta H) (Methanobacterium thermoautotrophicum)).